Reading from the N-terminus, the 86-residue chain is RNA-binding protein Hfq (86 aa).

The Sm domain maps to 12 to 73 (DIFLNQVRKE…ISTISPQKPV (62 aa)).

The protein belongs to the Hfq family. Homohexamer.

In terms of biological role, RNA chaperone that binds small regulatory RNA (sRNAs) and mRNAs to facilitate mRNA translational regulation in response to envelope stress, environmental stress and changes in metabolite concentrations. Also binds with high specificity to tRNAs. The polypeptide is RNA-binding protein Hfq (Caldanaerobacter subterraneus subsp. tengcongensis (strain DSM 15242 / JCM 11007 / NBRC 100824 / MB4) (Thermoanaerobacter tengcongensis)).